Here is a 24-residue protein sequence, read N- to C-terminus: Brevinin-1Pd (24 aa).

Cysteine 18 and cysteine 24 form a disulfide bridge.

As to expression, expressed by the skin glands.

The protein localises to the secreted. In terms of biological role, antibacterial activity against Gram-positive bacterium S.aureus and Gram-negative bacterium E.coli. Has activity against C.albicans. This chain is Brevinin-1Pd, found in Lithobates pipiens (Northern leopard frog).